The primary structure comprises 330 residues: HPr kinase/phosphorylase (330 aa).

Residues H153 and K174 contribute to the active site. ATP is bound at residue 168-175 (GKSGLGKS). S175 is a Mg(2+) binding site. D192 acts as the Proton acceptor; for phosphorylation activity. Proton donor; for dephosphorylation activity in catalysis. The tract at residues 217–226 (MEIRGLGVVD) is important for the catalytic mechanism of both phosphorylation and dephosphorylation. E218 provides a ligand contact to Mg(2+). R259 is a catalytic residue. Residues 280-285 (PIFPGK) are important for the catalytic mechanism of dephosphorylation.

This sequence belongs to the HPrK/P family. Homohexamer. Mg(2+) serves as cofactor.

It catalyses the reaction [HPr protein]-L-serine + ATP = [HPr protein]-O-phospho-L-serine + ADP + H(+). It carries out the reaction [HPr protein]-O-phospho-L-serine + phosphate + H(+) = [HPr protein]-L-serine + diphosphate. Functionally, catalyzes the ATP- as well as the pyrophosphate-dependent phosphorylation of a specific serine residue in HPr, a phosphocarrier protein of the phosphoenolpyruvate-dependent sugar phosphotransferase system (PTS). HprK/P also catalyzes the pyrophosphate-producing, inorganic phosphate-dependent dephosphorylation (phosphorolysis) of seryl-phosphorylated HPr (P-Ser-HPr). This Chlorobium limicola (strain DSM 245 / NBRC 103803 / 6330) protein is HPr kinase/phosphorylase.